A 448-amino-acid polypeptide reads, in one-letter code: Methionine aminopeptidase 2-1 (448 aa).

The tract at residues 1–90 is disordered; sequence MAAQASEKLE…PPRVPVSSLF (90 aa). Positions 22-33 are enriched in low complexity; the sequence is AAGPAKAGQADA. Residues 34 to 46 are compositionally biased toward acidic residues; it reads GEVEDESDDDADD. Residues 47-58 are compositionally biased toward low complexity; that stretch reads AGAAADGAANGA. Over residues 59–74 the composition is skewed to basic residues; the sequence is AKKKKKRKSKKKKKGG. The segment covering 75–88 has biased composition (low complexity); sequence AKVQSSPPRVPVSS. His198 lines the substrate pocket. Residues Asp218, Asp229, and His301 each contribute to the a divalent metal cation site. Residue His309 participates in substrate binding. Residues Glu334 and Glu429 each contribute to the a divalent metal cation site.

This sequence belongs to the peptidase M24A family. Methionine aminopeptidase eukaryotic type 2 subfamily. The cofactor is Co(2+). Zn(2+) is required as a cofactor. Requires Mn(2+) as cofactor. It depends on Fe(2+) as a cofactor.

The protein resides in the cytoplasm. The catalysed reaction is Release of N-terminal amino acids, preferentially methionine, from peptides and arylamides.. Cotranslationally removes the N-terminal methionine from nascent proteins. The N-terminal methionine is often cleaved when the second residue in the primary sequence is small and uncharged (Met-Ala-, Cys, Gly, Pro, Ser, Thr, or Val). The protein is Methionine aminopeptidase 2-1 of Emericella nidulans (strain FGSC A4 / ATCC 38163 / CBS 112.46 / NRRL 194 / M139) (Aspergillus nidulans).